A 410-amino-acid chain; its full sequence is LL-diaminopimelate aminotransferase (410 aa).

Substrate-binding residues include Y15 and G42. Pyridoxal 5'-phosphate is bound by residues Y72, 108 to 109, Y132, N188, Y219, and 247 to 249; these read AK and SFS. Residues K109, Y132, and N188 each contribute to the substrate site. An N6-(pyridoxal phosphate)lysine modification is found at K250. Pyridoxal 5'-phosphate contacts are provided by R258 and N293. Substrate contacts are provided by N293 and R389.

It belongs to the class-I pyridoxal-phosphate-dependent aminotransferase family. LL-diaminopimelate aminotransferase subfamily. As to quaternary structure, homodimer. The cofactor is pyridoxal 5'-phosphate.

The enzyme catalyses (2S,6S)-2,6-diaminopimelate + 2-oxoglutarate = (S)-2,3,4,5-tetrahydrodipicolinate + L-glutamate + H2O + H(+). It participates in amino-acid biosynthesis; L-lysine biosynthesis via DAP pathway; LL-2,6-diaminopimelate from (S)-tetrahydrodipicolinate (aminotransferase route): step 1/1. Functionally, involved in the synthesis of meso-diaminopimelate (m-DAP or DL-DAP), required for both lysine and peptidoglycan biosynthesis. Catalyzes the direct conversion of tetrahydrodipicolinate to LL-diaminopimelate. This chain is LL-diaminopimelate aminotransferase, found in Bacteroides thetaiotaomicron (strain ATCC 29148 / DSM 2079 / JCM 5827 / CCUG 10774 / NCTC 10582 / VPI-5482 / E50).